An 816-amino-acid polypeptide reads, in one-letter code: MGGGDISHMSPEVKWIFEMAWYGETVRYDGLICEEHPPKLSSDGIWEKLIIKSAGLYFWQYRLPKLEIVILLVFFLWQGFNILFKKLGLSIPKLSSMMLAGLLLNVLVTLSGENSIIADILVTKNRIDVAGCLGSFGFLIFWFLKGVRMDVKRIFKAEAKARVTGVAAVTFPIVVGFLLFNLKSAKNRPLTFQEYDVMLLMESITSFSGIARLLRDLGMNHSSIGRVALSSALVSDIVGLLLLIANVSRSSATLADGLAILTEITLFLVIAFAVVRPIMFKIIKRKGEGRPIEDKYIHGVLVLVCLSCMYWEDLSQFPPLGAFFLGLAIPNGPPIGSALVERLESFNFGIILPLFLTAVMLRTDTTAWKGALTFFSGDDKKFAVASLVLLIFLLKLSVSVIVPYLYKMPLRDSIILALIMSHKGIIELSFYLFSLSLKLVTKDTFSILVLSIVLNSLLIPMAIGFLYDPSKQFICYQKRNLASMKNMGELKTLVCIHRPDHISSMINLLEASYQSEDSPLTCYVLHLVELRGQDVPTLISHKVQKLGVGAGNKYSENVILSFEHFHRSVCSSISIDTFTCIANANHMQDDICWLALDKAVTLIILPFHRTWSLDRTSIVSDVEAIRFLNVNVLKQAPCSVGILIERHLVNKKQEPHESLKVCVIFVGGKDDREALAFAKRMARQENVTLTVLRLLASGKSKDATGWDQMLDTVELRELIKSNNAGMVKEETSTIYLEQEILDGADTSMLLRSMAFDYDLFVVGRTCGENHEATKGIENWCEFEELGVIGDFLASPDFPSKTSVLVVQQQRTVANNN.

The next 12 helical transmembrane spans lie at 64 to 84 (PKLE…NILF), 97 to 117 (MMLA…NSII), 127 to 147 (IDVA…LKGV), 163 to 183 (VTGV…FNLK), 197 to 214 (VMLL…ARLL), 227 to 247 (VALS…IANV), 255 to 275 (ADGL…FAVV), 297 to 317 (IHGV…LSQF), 343 to 363 (LESF…MLRT), 382 to 402 (FAVA…SVIV), 413 to 433 (SIIL…FYLF), and 447 to 467 (ILVL…GFLY).

It belongs to the monovalent cation:proton antiporter 2 (CPA2) transporter (TC 2.A.37) family. CHX (TC 2.A.37.4) subfamily. In terms of tissue distribution, specifically expressed in pollen.

It is found in the membrane. Its function is as follows. May operate as a cation/H(+) antiporter. The polypeptide is Cation/H(+) antiporter 8 (CHX8) (Arabidopsis thaliana (Mouse-ear cress)).